A 381-amino-acid chain; its full sequence is Putative F-box protein At3g17500 (381 aa).

The F-box domain occupies 1–45 (MMSNLPLDLVEEILSRVPATSLKRLRSTCKSWNNCYKDQRFTEKH).

This chain is Putative F-box protein At3g17500, found in Arabidopsis thaliana (Mouse-ear cress).